The following is a 430-amino-acid chain: uncharacterized protein (430 aa).

The next 12 membrane-spanning stretches (helical) occupy residues Leu18 to Val38, Phe49 to Leu69, Val80 to Ala100, Val109 to Leu129, Phe145 to Ile165, Thr175 to Leu195, Ile235 to Gly255, Thr256 to Ile276, Ile285 to Phe305, Thr307 to Val327, Met353 to Leu373, and Val377 to Val397. Positions Gly407–Arg430 are disordered. The segment covering Asp415–Arg430 has biased composition (basic and acidic residues).

It localises to the cell membrane. This is an uncharacterized protein from Bacillus subtilis (strain 168).